We begin with the raw amino-acid sequence, 562 residues long: Phosphoenolpyruvate carboxykinase (ATP) (562 aa).

265–272 provides a ligand contact to ATP; that stretch reads GLSGTGKT.

It belongs to the phosphoenolpyruvate carboxykinase (ATP) family.

The enzyme catalyses oxaloacetate + ATP = phosphoenolpyruvate + ADP + CO2. It participates in carbohydrate biosynthesis; gluconeogenesis. The chain is Phosphoenolpyruvate carboxykinase (ATP) (pckA) from Dictyostelium discoideum (Social amoeba).